A 363-amino-acid chain; its full sequence is Methyltransferase pynC (363 aa).

Residues 199–200 (GG), Asp225, 254–255 (SF), Arg270, and Arg271 contribute to the S-adenosyl-L-methionine site.

The protein belongs to the class I-like SAM-binding methyltransferase superfamily. Cation-independent O-methyltransferase family.

It participates in secondary metabolite biosynthesis. Its function is as follows. Methyltransferase; part of the gene cluster that mediates the biosynthesis of pyranonigrins, a family of antioxidative compounds. The first step of pyranonigrins biosynthesis is performed by the hybrid PKS-NRPS synthetase that condenses 6 malonyl-CoA units to an acetyl starter unit, to form a 1,3,5-trioxotetradecane-6,8-dienyl-ACP. The enoyl reductase (ER) domain of pynA is likely to be functional during the first two rounds of polyketide chain extension, to generate the saturated C-C bonds of the alkyl side chain. PynA subsequently forms the amide bond between the acyl chain and L-serine. Although pynA has a terminal reductase domain, it appears to require the thioesterase pynI for the release of the straight-chain intermediate from pynA via the formation of a tetramic acid pyranonigrin J. The methyltransferase pynC then coverts pyranonigrin J to pyranonigrin I via N-methylation. The FAD-dependent monooxygenase pynG catalyzes an epoxidation-mediated cyclization to form the dihydro-gamma-pyrone moiety, followed by pynD-catalyzed oxidation of the alcohol to the ketone and enolization to yield the characteristic tetramic acid-fused gamma-pyrone core of pyranonigrin H. Pyranonigrin H is substrate of pynH for dehydration-mediated exo-methylene formation from the serine side chain to produce pyranonigrin E, before the oxidase pynE reduces the exo-methylene of pyranonigrin E into a pendant methyl to form pyranonigrin G. The FAD-linked oxidoreductase pynB performs the reverse reaction and converts pyranonigrin G back to pyranonigrin E. This Aspergillus niger (strain ATCC MYA-4892 / CBS 513.88 / FGSC A1513) protein is Methyltransferase pynC.